Consider the following 348-residue polypeptide: Ion-translocating oxidoreductase complex subunit D (348 aa).

5 consecutive transmembrane segments (helical) span residues 15–35 (LTAKFMLWVMVAMLPALGMQA), 36–56 (YFFGYGVFIQVFIALLLAVAI), 67–87 (LTAFYVADLSGVLTALILAMS), 88–108 (IPPYAPYWIIVIGIIVALLLA), and 125–145 (VAYALLLVSFPVQMTGWLVPI). Threonine 186 carries the FMN phosphoryl threonine modification. 5 helical membrane passes run 212-232 (LFANGWWQINLAFLAGGLLLI), 241-261 (IPAAMLGMFALLSGLTDLLLP), 265-285 (LNVVSQLFSGAMMFGAFFIAT), 298-318 (LIFGGLIGLFVYLIRYYGNYP), and 320-340 (AVAFSVLLANICVPLIDHYTQ).

Belongs to the NqrB/RnfD family. In terms of assembly, the complex is composed of six subunits: RnfA, RnfB, RnfC, RnfD, RnfE and RnfG. The cofactor is FMN.

Its subcellular location is the cell inner membrane. In terms of biological role, part of a membrane-bound complex that couples electron transfer with translocation of ions across the membrane. The chain is Ion-translocating oxidoreductase complex subunit D from Actinobacillus pleuropneumoniae serotype 7 (strain AP76).